Reading from the N-terminus, the 380-residue chain is Queuine tRNA-ribosyltransferase (380 aa).

The Proton acceptor role is filled by D96. Substrate is bound by residues 96–100 (DSGGF), D150, Q193, and G220. Residues 251-257 (GVGAPDS) form an RNA binding region. The active-site Nucleophile is D270. The tract at residues 275 to 279 (TRIAR) is RNA binding; important for wobble base 34 recognition. Zn(2+) is bound by residues C308, C310, C313, and H339.

This sequence belongs to the queuine tRNA-ribosyltransferase family. In terms of assembly, homodimer. Within each dimer, one monomer is responsible for RNA recognition and catalysis, while the other monomer binds to the replacement base PreQ1. Zn(2+) serves as cofactor.

The enzyme catalyses 7-aminomethyl-7-carbaguanine + guanosine(34) in tRNA = 7-aminomethyl-7-carbaguanosine(34) in tRNA + guanine. It functions in the pathway tRNA modification; tRNA-queuosine biosynthesis. Catalyzes the base-exchange of a guanine (G) residue with the queuine precursor 7-aminomethyl-7-deazaguanine (PreQ1) at position 34 (anticodon wobble position) in tRNAs with GU(N) anticodons (tRNA-Asp, -Asn, -His and -Tyr). Catalysis occurs through a double-displacement mechanism. The nucleophile active site attacks the C1' of nucleotide 34 to detach the guanine base from the RNA, forming a covalent enzyme-RNA intermediate. The proton acceptor active site deprotonates the incoming PreQ1, allowing a nucleophilic attack on the C1' of the ribose to form the product. After dissociation, two additional enzymatic reactions on the tRNA convert PreQ1 to queuine (Q), resulting in the hypermodified nucleoside queuosine (7-(((4,5-cis-dihydroxy-2-cyclopenten-1-yl)amino)methyl)-7-deazaguanosine). The sequence is that of Queuine tRNA-ribosyltransferase from Streptococcus pyogenes serotype M49 (strain NZ131).